The chain runs to 2417 residues: Protein pad-1 (2417 aa).

4 disordered regions span residues 409–437 (SSNSSSLKKSPRKIQQSLKNPRKPGDREG), 449–475 (SNKDDDVTSVTSSAAANASSAPPPDEE), 994–1029 (TSTGEDSGDPSAAGAAGILRSSSPDPDVVPAFDDDT), and 1957–2032 (SMSN…RRDP). Low complexity-rich tracts occupy residues 456–468 (TSVTSSAAANASS) and 1002–1024 (DPSAAGAAGILRSSSPDPDVVPA). A compositionally biased stretch (polar residues) spans 1969 to 1982 (DNPSGSTRNSTLSL). Residues 2003-2014 (SKSENMKIEKKS) are compositionally biased toward basic and acidic residues. The segment covering 2015–2025 (SSNLRASIKDT) has biased composition (polar residues).

It belongs to the DOP1 family.

Its function is as follows. May be involved in protein traffic between late Golgi and early endosomes. Essential for cell patterning during gastrulation. This is Protein pad-1 (pad-1) from Caenorhabditis elegans.